We begin with the raw amino-acid sequence, 56 residues long: Large ribosomal subunit protein bL32 (56 aa).

The segment covering 1–16 (MAVQKNRKTRSKRGMR) has biased composition (basic residues). The segment at 1 to 28 (MAVQKNRKTRSKRGMRRSHDALTTAALS) is disordered.

The protein belongs to the bacterial ribosomal protein bL32 family.

This chain is Large ribosomal subunit protein bL32, found in Vibrio campbellii (strain ATCC BAA-1116).